The following is a 121-amino-acid chain: Large ribosomal subunit protein uL18 (121 aa).

The protein belongs to the universal ribosomal protein uL18 family. As to quaternary structure, part of the 50S ribosomal subunit; part of the 5S rRNA/L5/L18/L25 subcomplex. Contacts the 5S and 23S rRNAs.

Its function is as follows. This is one of the proteins that bind and probably mediate the attachment of the 5S RNA into the large ribosomal subunit, where it forms part of the central protuberance. The sequence is that of Large ribosomal subunit protein uL18 from Roseiflexus castenholzii (strain DSM 13941 / HLO8).